Reading from the N-terminus, the 729-residue chain is 1,4-alpha-glucan branching enzyme GlgB (729 aa).

The active-site Nucleophile is the D408. The active-site Proton donor is the E461.

The protein belongs to the glycosyl hydrolase 13 family. GlgB subfamily. Monomer.

It catalyses the reaction Transfers a segment of a (1-&gt;4)-alpha-D-glucan chain to a primary hydroxy group in a similar glucan chain.. Its pathway is glycan biosynthesis; glycogen biosynthesis. Catalyzes the formation of the alpha-1,6-glucosidic linkages in glycogen by scission of a 1,4-alpha-linked oligosaccharide from growing alpha-1,4-glucan chains and the subsequent attachment of the oligosaccharide to the alpha-1,6 position. The sequence is that of 1,4-alpha-glucan branching enzyme GlgB from Vibrio cholerae serotype O1 (strain ATCC 39315 / El Tor Inaba N16961).